Here is a 246-residue protein sequence, read N- to C-terminus: Large ribosomal subunit protein uL3 (246 aa).

The residue at position 151 (Gln151) is an N5-methylglutamine.

Belongs to the universal ribosomal protein uL3 family. In terms of assembly, part of the 50S ribosomal subunit. Forms a cluster with proteins L14 and L19. Post-translationally, methylated by PrmB.

Functionally, one of the primary rRNA binding proteins, it binds directly near the 3'-end of the 23S rRNA, where it nucleates assembly of the 50S subunit. The protein is Large ribosomal subunit protein uL3 of Bartonella henselae (strain ATCC 49882 / DSM 28221 / CCUG 30454 / Houston 1) (Rochalimaea henselae).